The sequence spans 500 residues: Putative beta-glucosidase 5 (500 aa).

Positions 1 to 20 (MEQFFALFTIFLSFAFPGRC) are cleaved as a signal peptide. Residues Gln-43, His-140, and 185–186 (NE) contribute to the a beta-D-glucoside site. The active-site Proton donor is the Glu-186. A disulfide bridge links Cys-205 with Cys-212. Asn-216 carries N-linked (GlcNAc...) asparagine glycosylation. Position 328 (Tyr-328) interacts with a beta-D-glucoside. The N-linked (GlcNAc...) asparagine glycan is linked to Asn-361. A beta-D-glucoside is bound at residue Glu-394. Glu-394 acts as the Nucleophile in catalysis. Asn-424 is a glycosylation site (N-linked (GlcNAc...) asparagine). A beta-D-glucoside-binding residues include Trp-434 and Tyr-450. 2 N-linked (GlcNAc...) asparagine glycosylation sites follow: Asn-456 and Asn-495.

The protein belongs to the glycosyl hydrolase 1 family.

The catalysed reaction is Hydrolysis of terminal, non-reducing beta-D-glucosyl residues with release of beta-D-glucose.. This Arabidopsis thaliana (Mouse-ear cress) protein is Putative beta-glucosidase 5.